Reading from the N-terminus, the 263-residue chain is Small ribosomal subunit protein eS4 (263 aa).

Residues 42–104 (LPLVIFLRNR…TNELFRLIYD (63 aa)) form the S4 RNA-binding domain.

This sequence belongs to the eukaryotic ribosomal protein eS4 family.

The sequence is that of Small ribosomal subunit protein eS4 (RpS4) from Spodoptera frugiperda (Fall armyworm).